Reading from the N-terminus, the 77-residue chain is Acyl carrier protein (77 aa).

Positions 2–77 (ADVLERVTKI…DAVNYIKSRL (76 aa)) constitute a Carrier domain. Ser-37 is subject to O-(pantetheine 4'-phosphoryl)serine.

Belongs to the acyl carrier protein (ACP) family. Post-translationally, 4'-phosphopantetheine is transferred from CoA to a specific serine of apo-ACP by AcpS. This modification is essential for activity because fatty acids are bound in thioester linkage to the sulfhydryl of the prosthetic group.

Its subcellular location is the cytoplasm. Its pathway is lipid metabolism; fatty acid biosynthesis. Carrier of the growing fatty acid chain in fatty acid biosynthesis. The polypeptide is Acyl carrier protein (Geobacillus kaustophilus (strain HTA426)).